The primary structure comprises 253 residues: 5'/3'-nucleotidase SurE (253 aa).

4 residues coordinate a divalent metal cation: Asp-8, Asp-9, Ser-39, and Asn-92.

This sequence belongs to the SurE nucleotidase family. Requires a divalent metal cation as cofactor.

It is found in the cytoplasm. The catalysed reaction is a ribonucleoside 5'-phosphate + H2O = a ribonucleoside + phosphate. It carries out the reaction a ribonucleoside 3'-phosphate + H2O = a ribonucleoside + phosphate. The enzyme catalyses [phosphate](n) + H2O = [phosphate](n-1) + phosphate + H(+). Functionally, nucleotidase with a broad substrate specificity as it can dephosphorylate various ribo- and deoxyribonucleoside 5'-monophosphates and ribonucleoside 3'-monophosphates with highest affinity to 3'-AMP. Also hydrolyzes polyphosphate (exopolyphosphatase activity) with the preference for short-chain-length substrates (P20-25). Might be involved in the regulation of dNTP and NTP pools, and in the turnover of 3'-mononucleotides produced by numerous intracellular RNases (T1, T2, and F) during the degradation of various RNAs. The sequence is that of 5'/3'-nucleotidase SurE from Salmonella paratyphi B (strain ATCC BAA-1250 / SPB7).